A 751-amino-acid chain; its full sequence is Semaphorin-3C (751 aa).

A signal peptide spans 1-21; sequence MAVLALHAVFGIFIYFSSVKG. One can recognise a Sema domain in the interval 28 to 511; that stretch reads RVFLTFNELQ…SEEGVTQVPL (484 aa). Asn81 carries N-linked (GlcNAc...) asparagine glycosylation. Residues Cys101 and Cys112 are joined by a disulfide bond. An N-linked (GlcNAc...) asparagine glycan is attached at Asn123. Disulfide bonds link Cys130-Cys139, Cys266-Cys378, and Cys290-Cys338. Residue Asn268 is glycosylated (N-linked (GlcNAc...) asparagine). Asn465 carries N-linked (GlcNAc...) asparagine glycosylation. Cys514 and Cys532 are disulfide-bonded. The Ig-like C2-type domain maps to 571 to 655; sequence AYRNAAETVQ…TENNFKQTLA (85 aa). Residues Asn585 and Asn586 are each glycosylated (N-linked (GlcNAc...) asparagine). A disulfide bond links Cys643 and Cys709. A compositionally biased stretch (basic and acidic residues) spans 712–731; the sequence is SRQQGQRREEPQKMRGDYSK. A disordered region spans residues 712–751; the sequence is SRQQGQRREEPQKMRGDYSKLKALINSRKSRNRRNQLPAS.

This sequence belongs to the semaphorin family. Collapsin-1, -2, -3, and -5 bind to overlapping but distinct axon tracts.

Its subcellular location is the secreted. Its function is as follows. Induces the collapse and paralysis of neuronal growth cones. Could potentially act as repulsive cues toward specific neuronal populations. Binds to neuropilin. In Gallus gallus (Chicken), this protein is Semaphorin-3C (SEMA3C).